A 384-amino-acid chain; its full sequence is Lipoyl synthase 2, chloroplastic (384 aa).

The transit peptide at Met1–Arg48 directs the protein to the chloroplast. Residues Cys108, Cys113, Cys119, Cys145, Cys149, Cys152, and Ser360 each coordinate [4Fe-4S] cluster. Positions Gly128–Leu349 constitute a Radical SAM core domain.

The protein belongs to the radical SAM superfamily. Lipoyl synthase family. [4Fe-4S] cluster is required as a cofactor.

The protein localises to the plastid. It localises to the chloroplast. The enzyme catalyses [[Fe-S] cluster scaffold protein carrying a second [4Fe-4S](2+) cluster] + N(6)-octanoyl-L-lysyl-[protein] + 2 oxidized [2Fe-2S]-[ferredoxin] + 2 S-adenosyl-L-methionine + 4 H(+) = [[Fe-S] cluster scaffold protein] + N(6)-[(R)-dihydrolipoyl]-L-lysyl-[protein] + 4 Fe(3+) + 2 hydrogen sulfide + 2 5'-deoxyadenosine + 2 L-methionine + 2 reduced [2Fe-2S]-[ferredoxin]. The protein operates within protein modification; protein lipoylation via endogenous pathway; protein N(6)-(lipoyl)lysine from octanoyl-[acyl-carrier-protein]: step 2/2. Catalyzes the radical-mediated insertion of two sulfur atoms into the C-6 and C-8 positions of the octanoyl moiety bound to the lipoyl domains of lipoate-dependent enzymes, thereby converting the octanoylated domains into lipoylated derivatives. The chain is Lipoyl synthase 2, chloroplastic from Oryza sativa subsp. indica (Rice).